A 207-amino-acid polypeptide reads, in one-letter code: Pyrrolidone-carboxylate peptidase (207 aa).

Residues glutamate 80, cysteine 143, and histidine 167 contribute to the active site.

The protein belongs to the peptidase C15 family. Homotetramer.

Its subcellular location is the cytoplasm. The catalysed reaction is Release of an N-terminal pyroglutamyl group from a polypeptide, the second amino acid generally not being Pro.. Functionally, removes 5-oxoproline from various penultimate amino acid residues except L-proline. This Coprothermobacter proteolyticus (strain ATCC 35245 / DSM 5265 / OCM 4 / BT) protein is Pyrrolidone-carboxylate peptidase.